An 832-amino-acid polypeptide reads, in one-letter code: Subtilisin-like protease SBT2.4 (832 aa).

The N-terminal stretch at Met-1–Ala-27 is a signal peptide. An Inhibitor I9 domain is found at Glu-74–Met-138. The region spanning Gln-150–Leu-690 is the Peptidase S8 domain. The Charge relay system role is filled by Asp-174. Residues Asn-196 and Asn-238 are each glycosylated (N-linked (GlcNAc...) asparagine). His-252 serves as the catalytic Charge relay system. In terms of domain architecture, PA spans Thr-425–Tyr-524. A glycan (N-linked (GlcNAc...) asparagine) is linked at Asn-426. The Charge relay system role is filled by Ser-618. Residues Asn-761, Asn-774, and Asn-800 are each glycosylated (N-linked (GlcNAc...) asparagine).

This sequence belongs to the peptidase S8 family.

The protein resides in the secreted. In terms of biological role, serine protease required for epidermal surface formation in embryos and juvenile plants. Involved in embryonic cuticle formation downstream of BHLH95/ZOU. This chain is Subtilisin-like protease SBT2.4, found in Arabidopsis thaliana (Mouse-ear cress).